Reading from the N-terminus, the 286-residue chain is Polyamine aminopropyltransferase (286 aa).

Residues 5–238 (KIWHEKLHRH…GTMMFSWGTD (234 aa)) enclose the PABS domain. Histidine 64 and aspartate 88 together coordinate spermidine. S-methyl-5'-thioadenosine-binding positions include glutamate 108 and 140 to 141 (NG). Aspartate 158 acts as the Proton acceptor in catalysis. Spermidine is bound at residue 158–161 (DSTD).

Belongs to the spermidine/spermine synthase family. In terms of assembly, homodimer or homotetramer.

The protein localises to the cytoplasm. The catalysed reaction is S-adenosyl 3-(methylsulfanyl)propylamine + putrescine = S-methyl-5'-thioadenosine + spermidine + H(+). It functions in the pathway amine and polyamine biosynthesis; spermidine biosynthesis; spermidine from putrescine: step 1/1. Its function is as follows. Catalyzes the irreversible transfer of a propylamine group from the amino donor S-adenosylmethioninamine (decarboxy-AdoMet) to putrescine (1,4-diaminobutane) to yield spermidine. The polypeptide is Polyamine aminopropyltransferase (Buchnera aphidicola subsp. Schizaphis graminum (strain Sg)).